Reading from the N-terminus, the 274-residue chain is Transcription factor MYB58 (274 aa).

HTH myb-type domains follow at residues 11–63 and 64–118; these read KTKV…INYL and RPDV…KKRL. 2 consecutive DNA-binding regions (H-T-H motif) follow at residues 39–63 and 91–114; these read WRSL…INYL and WSKI…HTHL. Disordered regions lie at residues 121-160 and 237-274; these read ETNL…ISSK and SELG…LLIH. The segment covering 263–274 has biased composition (low complexity); that stretch reads SSLLESYELLIH.

Expressed in leaves. Specifically expressed in fibers and vessels undergoing secondary wall thickening, especially in inflorescence stems.

It is found in the nucleus. Functionally, transcriptional activator that binds DNA to the AC cis-elements 5'-ACCTACC-3', 5'-ACCAACC-3' and 5'-ACCTAAC-3' of promoters and specifically activates lignin biosynthetic genes during secondary wall formation mediated by SND1. The protein is Transcription factor MYB58 of Arabidopsis thaliana (Mouse-ear cress).